We begin with the raw amino-acid sequence, 406 residues long: 4-hydroxy-3-methylbut-2-en-1-yl diphosphate synthase (ferredoxin) (406 aa).

4 residues coordinate [4Fe-4S] cluster: Cys315, Cys318, Cys349, and Glu356.

The protein belongs to the IspG family. Requires [4Fe-4S] cluster as cofactor.

The catalysed reaction is (2E)-4-hydroxy-3-methylbut-2-enyl diphosphate + 2 oxidized [2Fe-2S]-[ferredoxin] + H2O = 2-C-methyl-D-erythritol 2,4-cyclic diphosphate + 2 reduced [2Fe-2S]-[ferredoxin] + H(+). It participates in isoprenoid biosynthesis; isopentenyl diphosphate biosynthesis via DXP pathway; isopentenyl diphosphate from 1-deoxy-D-xylulose 5-phosphate: step 5/6. Converts 2C-methyl-D-erythritol 2,4-cyclodiphosphate (ME-2,4cPP) into 1-hydroxy-2-methyl-2-(E)-butenyl 4-diphosphate. The protein is 4-hydroxy-3-methylbut-2-en-1-yl diphosphate synthase (ferredoxin) of Microcystis aeruginosa (strain NIES-843 / IAM M-2473).